Reading from the N-terminus, the 298-residue chain is 4-diphosphocytidyl-2-C-methyl-D-erythritol kinase (298 aa).

Residue Lys25 is part of the active site. 109–119 (PVGGGFGGGSS) lines the ATP pocket. Asp151 is an active-site residue.

This sequence belongs to the GHMP kinase family. IspE subfamily.

It carries out the reaction 4-CDP-2-C-methyl-D-erythritol + ATP = 4-CDP-2-C-methyl-D-erythritol 2-phosphate + ADP + H(+). It participates in isoprenoid biosynthesis; isopentenyl diphosphate biosynthesis via DXP pathway; isopentenyl diphosphate from 1-deoxy-D-xylulose 5-phosphate: step 3/6. Catalyzes the phosphorylation of the position 2 hydroxy group of 4-diphosphocytidyl-2C-methyl-D-erythritol. The protein is 4-diphosphocytidyl-2-C-methyl-D-erythritol kinase of Xylella fastidiosa (strain 9a5c).